A 601-amino-acid polypeptide reads, in one-letter code: 66 kDa stress protein (601 aa).

10 WD repeats span residues 56 to 95, 100 to 143, 145 to 184, 187 to 226, 233 to 272, 318 to 357, 435 to 478, 483 to 522, 526 to 565, and 569 to 600; these read EHAQ…HPLK, VLSG…GEIT, HSKA…FKHA, EHTR…KVGA, AHAL…LTTF, GHNK…AVPI, ASTT…LSEQ, GHRG…IKVE, YHNA…KHIA, and AHRG…WTIK.

The protein belongs to the WD repeat AIP1 family.

In terms of biological role, associated with the process of cyst formation. The sequence is that of 66 kDa stress protein from Physarum polycephalum (Slime mold).